The following is a 488-amino-acid chain: MSRKLVIDPVTRIEGHGKVVVHLDDDNKVVDAKLHVVEFRGFEKFVQGHPFWEAPMFLQRICGICFVSHHLCGAKALDDMVGVGLKSGIHVTPTAEKMRRLGHYAQMLQSHTTAYFYLIVPEMLFGMDAPPAQRNVLGLIEANPDLVKRVVMLRKWGQEVIKAVFGKKMHGINSVPGGVNNNLSIAERDRFLNGEEGLLSVDQVIDYAQDGLRLFYDFHQKHRAQVDSFADVPALSMCLVGDDDNVDYYHGRLRIIDDDKHIVREFDYHDYLDHFSEAVEEWSYMKFPYLKELGREQGSVRVGPLGRMNVTKSLPTPLAQEALERFHAYTKGRTNNMTLHTNWARAIEILHAAEVVKELLHDPDLQKDQLVLTPPPNAWTGEGVGVVEAPRGTLLHHYRADERGNITFANLVVATTQNNQVMNRTVRSVAEDYLGGHGEITEGMMNAIEVGIRAYDPCLSCATHALGQMPLVVSVFDAAGRLIDERAR.

4 residues coordinate Ni(2+): cysteine 62, cysteine 65, cysteine 458, and cysteine 461.

This sequence belongs to the [NiFe]/[NiFeSe] hydrogenase large subunit family. As to quaternary structure, tetramer of an alpha and a gamma subunits (flavin-containing dimer), and a delta and a nickel-containing beta subunits (hydrogenase dimer). The cofactor is FMN. It depends on Ni(2+) as a cofactor.

Its subcellular location is the cytoplasm. The enzyme catalyses H2 + NAD(+) = NADH + H(+). This Cupriavidus necator (strain ATCC 17699 / DSM 428 / KCTC 22496 / NCIMB 10442 / H16 / Stanier 337) (Ralstonia eutropha) protein is NAD-reducing hydrogenase HoxS subunit beta (hoxH).